The chain runs to 209 residues: FMN-dependent NADH:quinone oxidoreductase (209 aa).

Residues Ser-9 and 15–17 (SNS) contribute to the FMN site.

Belongs to the azoreductase type 1 family. As to quaternary structure, homodimer. FMN is required as a cofactor.

The catalysed reaction is 2 a quinone + NADH + H(+) = 2 a 1,4-benzosemiquinone + NAD(+). It catalyses the reaction N,N-dimethyl-1,4-phenylenediamine + anthranilate + 2 NAD(+) = 2-(4-dimethylaminophenyl)diazenylbenzoate + 2 NADH + 2 H(+). In terms of biological role, quinone reductase that provides resistance to thiol-specific stress caused by electrophilic quinones. Functionally, also exhibits azoreductase activity. Catalyzes the reductive cleavage of the azo bond in aromatic azo compounds to the corresponding amines. The chain is FMN-dependent NADH:quinone oxidoreductase from Bordetella parapertussis (strain 12822 / ATCC BAA-587 / NCTC 13253).